The sequence spans 378 residues: MDIVCEFCDKSFDSKSKVNAHQRTKKCQQFRTITFVCRKCSSAILGYDNILFHVENCNGTTPILHKEIEDKIKVKNHNKEHDNKIFFGKGLNGKTVYIFNYEKSMLTYGSTNIISESIVSTIDNLVEKATLKSLNDAIQSFSKESFLQEILFKYPQPFSISDISKFFEYESRTVMAFLMAKDLNDLFEILFKECKLFPVCIVNDDIYVIDKVVRQNLDKWILEWKQIDYKEVSLSLKGFFLPVLNYAIKLFLNESNNNTTLKLLELIKEIADETKIRKLMSTFTKPIPVFEDIQNIFQNVKYIYNGSYKHTPMDTFIKNISYGSCFVKEKSIKTEHELYSLLMSLTKESEKTALIKKIKMNDNDDIVEIEKEMKLLKV.

The C2H2-type; degenerate zinc finger occupies 3-25 (IVCEFCDKSFDSKSKVNAHQRTK).

It belongs to the IIV-6 302L family.

The polypeptide is Putative zinc finger protein 302L (Invertebrate iridescent virus 6 (IIV-6)).